A 346-amino-acid chain; its full sequence is 3-isopropylmalate dehydrogenase (346 aa).

NAD(+) is bound at residue 76-87; the sequence is GPKWTDPNNRPE. Residues arginine 94, arginine 104, arginine 132, and aspartate 217 each contribute to the substrate site. Positions 217, 241, and 245 each coordinate Mg(2+). 275–287 contacts NAD(+); that stretch reads GSAPDIANQDIAN.

Belongs to the isocitrate and isopropylmalate dehydrogenases family. LeuB type 1 subfamily. In terms of assembly, homodimer. Mg(2+) is required as a cofactor. Mn(2+) serves as cofactor.

Its subcellular location is the cytoplasm. It catalyses the reaction (2R,3S)-3-isopropylmalate + NAD(+) = 4-methyl-2-oxopentanoate + CO2 + NADH. Its pathway is amino-acid biosynthesis; L-leucine biosynthesis; L-leucine from 3-methyl-2-oxobutanoate: step 3/4. In terms of biological role, catalyzes the oxidation of 3-carboxy-2-hydroxy-4-methylpentanoate (3-isopropylmalate) to 3-carboxy-4-methyl-2-oxopentanoate. The product decarboxylates to 4-methyl-2 oxopentanoate. The chain is 3-isopropylmalate dehydrogenase from Staphylococcus saprophyticus subsp. saprophyticus (strain ATCC 15305 / DSM 20229 / NCIMB 8711 / NCTC 7292 / S-41).